The chain runs to 287 residues: tRNA selenocysteine 1-associated protein 1 (287 aa).

RRM domains follow at residues 3–86 (ASLW…YVTY) and 96–175 (YSLF…VAIP).

Belongs to the RRM TRSPAP family. As to quaternary structure, component of the tRNA(Sec) complex composed at least of EEFSEC, SECISBP2, SEPHS1, SEPSECS, TRNAU1AP and tRNA(Sec). Found in a complex with tRNA(Sec). Interacts with SEPSECS. Associates with mRNP and/or polysomes. Found in a complex with EEFSEC, SECISBP2, TRNAU1AP and tRNA(Sec).

The protein localises to the nucleus. Its subcellular location is the cytoplasm. In terms of biological role, involved in the early steps of selenocysteine biosynthesis and tRNA(Sec) charging to the later steps resulting in the cotranslational incorporation of selenocysteine into selenoproteins. Stabilizes the SECISBP2, EEFSEC and tRNA(Sec) complex. May be involved in the methylation of tRNA(Sec). Enhances efficiency of selenoproteins synthesis. This chain is tRNA selenocysteine 1-associated protein 1 (TRNAU1AP), found in Pongo abelii (Sumatran orangutan).